Reading from the N-terminus, the 195-residue chain is Myelin basic protein (195 aa).

Ala-2 carries the post-translational modification N-acetylalanine. Ser-8 and Ser-13 each carry phosphoserine. Tyr-15 bears the Phosphotyrosine mark. Phosphothreonine is present on Thr-18. Position 20 is a phosphoserine (Ser-20). Thr-21 carries the post-translational modification Phosphothreonine. 2 positions are modified to citrulline: Arg-26 and Arg-32. Residue Thr-36 is modified to Phosphothreonine. A Phosphoserine modification is found at Ser-41. An omega-N-methylarginine mark is found at Arg-44 and Arg-50. A disordered region spans residues 45 to 79; sequence FFSGDRGAPKRGSGKVPWLKQSRSPLPSHARSRPG. At Ser-57 the chain carries Phosphoserine. Phosphothreonine is present on Thr-92. Residue Tyr-94 is modified to Phosphotyrosine. Phosphoserine is present on Ser-101. Thr-104, Thr-119, and Thr-122 each carry phosphothreonine. The tract at residues 117–139 is disordered; it reads IVTPRTPPPSQGKGRGLSLSRFS. Gln-127 carries the deamidated glutamine modification. Omega-N-methylarginine; alternate is present on Arg-131. Arg-131 is subject to Symmetric dimethylarginine; alternate. Position 139 is a phosphoserine (Ser-139). Position 146 is an N6-acetyllysine (Lys-146). Residue Arg-154 is modified to Citrulline. At Gln-172 the chain carries Deamidated glutamine. A Citrulline modification is found at Arg-184. Ser-186 bears the Phosphoserine mark. Ser-190 is subject to Phosphoserine; by UHMK1. A Citrulline modification is found at Arg-195.

Belongs to the myelin basic protein family. Homodimer. As in other animals, several charge isomers may be produced as a result of optional post-translational modifications, such as phosphorylation of serine or threonine residues, deamidation of glutamine or asparagine residues, citrullination and methylation of arginine residues. In terms of processing, arg-131 was found to be 44% monomethylated and 11% symmetrically dimethylated. Post-translationally, phosphorylated by TAOK2, VRK2, MAPK11, MAPK12, MAPK14 and MINK1. Proteolytically cleaved in B cell lysosomes by cathepsin CTSG which degrades the major immunogenic MBP epitope and prevents the activation of MBP-specific autoreactive T cells. In terms of tissue distribution, found in both the central and the peripheral nervous system.

It is found in the myelin membrane. Its function is as follows. Is, with PLP, the most abundant protein component of the myelin membrane in the CNS. Has a role in both the formation and stabilization of this compact multilayer arrangement of bilayers. Each splice variant and charge isomer may have a specialized function in the assembly of an optimized, biochemically functional myelin membrane. This chain is Myelin basic protein (Mbp), found in Rattus norvegicus (Rat).